A 269-amino-acid chain; its full sequence is 3-methyl-2-oxobutanoate hydroxymethyltransferase (269 aa).

The Mg(2+) site is built by D50 and D89. 3-methyl-2-oxobutanoate-binding positions include 50–51 (DS), D89, and K118. E120 provides a ligand contact to Mg(2+). E187 acts as the Proton acceptor in catalysis.

It belongs to the PanB family. Homodecamer; pentamer of dimers. Mg(2+) is required as a cofactor.

The protein localises to the cytoplasm. The enzyme catalyses 3-methyl-2-oxobutanoate + (6R)-5,10-methylene-5,6,7,8-tetrahydrofolate + H2O = 2-dehydropantoate + (6S)-5,6,7,8-tetrahydrofolate. Its pathway is cofactor biosynthesis; (R)-pantothenate biosynthesis; (R)-pantoate from 3-methyl-2-oxobutanoate: step 1/2. Functionally, catalyzes the reversible reaction in which hydroxymethyl group from 5,10-methylenetetrahydrofolate is transferred onto alpha-ketoisovalerate to form ketopantoate. The chain is 3-methyl-2-oxobutanoate hydroxymethyltransferase from Nitrosomonas europaea (strain ATCC 19718 / CIP 103999 / KCTC 2705 / NBRC 14298).